A 468-amino-acid polypeptide reads, in one-letter code: Glutamate--tRNA ligase (468 aa).

The 'HIGH' region signature appears at 8–18 (PSPTGFLHVGG). Positions 97, 99, 124, and 126 each coordinate Zn(2+). Positions 236–240 (KLSKR) match the 'KMSKS' region motif. ATP is bound at residue lysine 239.

This sequence belongs to the class-I aminoacyl-tRNA synthetase family. Glutamate--tRNA ligase type 1 subfamily. Monomer. Zn(2+) serves as cofactor.

It localises to the cytoplasm. The catalysed reaction is tRNA(Glu) + L-glutamate + ATP = L-glutamyl-tRNA(Glu) + AMP + diphosphate. In terms of biological role, catalyzes the attachment of glutamate to tRNA(Glu) in a two-step reaction: glutamate is first activated by ATP to form Glu-AMP and then transferred to the acceptor end of tRNA(Glu). This Francisella tularensis subsp. novicida (strain U112) protein is Glutamate--tRNA ligase.